Consider the following 878-residue polypeptide: NUT family member 2A (878 aa).

Disordered stretches follow at residues 273 to 324 (WSQG…DDSC), 417 to 566 (QKSQ…LSYT), 627 to 757 (KEKQ…EEEE), and 775 to 878 (WLPQ…RCSQ). 2 stretches are compositionally biased toward pro residues: residues 278–288 (PLPPPPPPAAQ) and 427–444 (CLPPPATPRLEPRGPPAP). Over residues 476-487 (TKARRPPPRPHR) the composition is skewed to basic residues. The span at 537 to 551 (EPEKQREEGEVKQPQ) shows a compositional bias: basic and acidic residues.

Belongs to the NUT family.

The protein is NUT family member 2A (NUTM2A) of Homo sapiens (Human).